A 293-amino-acid chain; its full sequence is 4-hydroxybenzoate octaprenyltransferase (293 aa).

8 helical membrane passes run 19 to 39 (PIGI…ASNG), 43 to 63 (WLIL…GCVV), 95 to 115 (LLAA…NALV), 135 to 155 (FFAI…PMSY), 158 to 178 (LWGE…FWAI), 209 to 229 (LTAI…VGAL), 231 to 251 (DFSG…VYHL), and 266 to 286 (FLHN…HFLL).

This sequence belongs to the UbiA prenyltransferase family. Mg(2+) serves as cofactor.

It localises to the cell inner membrane. The catalysed reaction is all-trans-octaprenyl diphosphate + 4-hydroxybenzoate = 4-hydroxy-3-(all-trans-octaprenyl)benzoate + diphosphate. It functions in the pathway cofactor biosynthesis; ubiquinone biosynthesis. In terms of biological role, catalyzes the prenylation of para-hydroxybenzoate (PHB) with an all-trans polyprenyl group. Mediates the second step in the final reaction sequence of ubiquinone-8 (UQ-8) biosynthesis, which is the condensation of the polyisoprenoid side chain with PHB, generating the first membrane-bound Q intermediate 3-octaprenyl-4-hydroxybenzoate. The polypeptide is 4-hydroxybenzoate octaprenyltransferase (Thiobacillus denitrificans (strain ATCC 25259 / T1)).